Here is a 183-residue protein sequence, read N- to C-terminus: ATP synthase subunit delta, chloroplastic (183 aa).

It belongs to the ATPase delta chain family. F-type ATPases have 2 components, F(1) - the catalytic core - and F(0) - the membrane proton channel. F(1) has five subunits: alpha(3), beta(3), gamma(1), delta(1), epsilon(1). CF(0) has four main subunits: a(1), b(1), b'(1) and c(10-14). The alpha and beta chains form an alternating ring which encloses part of the gamma chain. F(1) is attached to F(0) by a central stalk formed by the gamma and epsilon chains, while a peripheral stalk is formed by the delta, b and b' chains.

The protein localises to the plastid. Its subcellular location is the chloroplast thylakoid membrane. F(1)F(0) ATP synthase produces ATP from ADP in the presence of a proton or sodium gradient. F-type ATPases consist of two structural domains, F(1) containing the extramembraneous catalytic core and F(0) containing the membrane proton channel, linked together by a central stalk and a peripheral stalk. During catalysis, ATP synthesis in the catalytic domain of F(1) is coupled via a rotary mechanism of the central stalk subunits to proton translocation. Its function is as follows. This protein is part of the stalk that links CF(0) to CF(1). It either transmits conformational changes from CF(0) to CF(1) or is implicated in proton conduction. The polypeptide is ATP synthase subunit delta, chloroplastic (Cyanidium caldarium (Red alga)).